The chain runs to 234 residues: Adenosine 5'-phosphosulfate reductase (234 aa).

4 residues coordinate [4Fe-4S] cluster: Cys-120, Cys-121, Cys-203, and Cys-206. Cys-229 serves as the catalytic Nucleophile; cysteine thiosulfonate intermediate.

Belongs to the PAPS reductase family. CysH subfamily. It depends on [4Fe-4S] cluster as a cofactor.

The protein localises to the cytoplasm. The enzyme catalyses [thioredoxin]-disulfide + sulfite + AMP + 2 H(+) = adenosine 5'-phosphosulfate + [thioredoxin]-dithiol. Its pathway is sulfur metabolism; hydrogen sulfide biosynthesis; sulfite from sulfate. In terms of biological role, catalyzes the formation of sulfite from adenosine 5'-phosphosulfate (APS) using thioredoxin as an electron donor. In Bacillus thuringiensis (strain Al Hakam), this protein is Adenosine 5'-phosphosulfate reductase.